The sequence spans 595 residues: Elongation factor 4 (595 aa).

Positions 2–183 (KNIRNFCIIA…TIVEKVPAPK (182 aa)) constitute a tr-type G domain. GTP-binding positions include 14-19 (DHGKST) and 130-133 (NKID).

Belongs to the TRAFAC class translation factor GTPase superfamily. Classic translation factor GTPase family. LepA subfamily.

Its subcellular location is the cell inner membrane. The enzyme catalyses GTP + H2O = GDP + phosphate + H(+). In terms of biological role, required for accurate and efficient protein synthesis under certain stress conditions. May act as a fidelity factor of the translation reaction, by catalyzing a one-codon backward translocation of tRNAs on improperly translocated ribosomes. Back-translocation proceeds from a post-translocation (POST) complex to a pre-translocation (PRE) complex, thus giving elongation factor G a second chance to translocate the tRNAs correctly. Binds to ribosomes in a GTP-dependent manner. This chain is Elongation factor 4, found in Parabacteroides distasonis (strain ATCC 8503 / DSM 20701 / CIP 104284 / JCM 5825 / NCTC 11152).